A 319-amino-acid chain; its full sequence is Acetyl-coenzyme A carboxylase carboxyl transferase subunit alpha (319 aa).

The CoA carboxyltransferase C-terminal domain maps to 39–293 (RLQKKSNDLT…KAVLEKQLHE (255 aa)).

Belongs to the AccA family. Acetyl-CoA carboxylase is a heterohexamer composed of biotin carboxyl carrier protein (AccB), biotin carboxylase (AccC) and two subunits each of ACCase subunit alpha (AccA) and ACCase subunit beta (AccD).

It is found in the cytoplasm. It carries out the reaction N(6)-carboxybiotinyl-L-lysyl-[protein] + acetyl-CoA = N(6)-biotinyl-L-lysyl-[protein] + malonyl-CoA. It participates in lipid metabolism; malonyl-CoA biosynthesis; malonyl-CoA from acetyl-CoA: step 1/1. In terms of biological role, component of the acetyl coenzyme A carboxylase (ACC) complex. First, biotin carboxylase catalyzes the carboxylation of biotin on its carrier protein (BCCP) and then the CO(2) group is transferred by the carboxyltransferase to acetyl-CoA to form malonyl-CoA. In Neisseria gonorrhoeae (strain ATCC 700825 / FA 1090), this protein is Acetyl-coenzyme A carboxylase carboxyl transferase subunit alpha.